The primary structure comprises 147 residues: uncharacterized protein (147 aa).

The HTH marR-type domain maps to 1-137 (MRDNTIGSLI…LYELMTKVHK (137 aa)). The segment at residues 53–76 (QMELAEKVTVTQGGISRMLTRLEK) is a DNA-binding region (H-T-H motif).

This is an uncharacterized protein from Bacillus anthracis.